The chain runs to 494 residues: Ketol-acid reductoisomerase (NADP(+)) (494 aa).

One can recognise a KARI N-terminal Rossmann domain in the interval 14–208 (LEQLGKCRFM…GGHRAGVLQS (195 aa)). NADP(+) contacts are provided by residues 45-48 (CGAQ), Arg-68, Arg-76, Ser-78, and 108-110 (DKQ). Residue His-132 is part of the active site. Gly-158 contributes to the NADP(+) binding site. KARI C-terminal knotted domains follow at residues 209 to 344 (SFVA…NAPA) and 345 to 487 (FDGA…MKDM). Mg(2+) contacts are provided by Asp-217, Glu-221, Glu-389, and Glu-393. Ser-414 contributes to the substrate binding site.

It belongs to the ketol-acid reductoisomerase family. The cofactor is Mg(2+).

It carries out the reaction (2R)-2,3-dihydroxy-3-methylbutanoate + NADP(+) = (2S)-2-acetolactate + NADPH + H(+). It catalyses the reaction (2R,3R)-2,3-dihydroxy-3-methylpentanoate + NADP(+) = (S)-2-ethyl-2-hydroxy-3-oxobutanoate + NADPH + H(+). It functions in the pathway amino-acid biosynthesis; L-isoleucine biosynthesis; L-isoleucine from 2-oxobutanoate: step 2/4. It participates in amino-acid biosynthesis; L-valine biosynthesis; L-valine from pyruvate: step 2/4. Functionally, involved in the biosynthesis of branched-chain amino acids (BCAA). Catalyzes an alkyl-migration followed by a ketol-acid reduction of (S)-2-acetolactate (S2AL) to yield (R)-2,3-dihydroxy-isovalerate. In the isomerase reaction, S2AL is rearranged via a Mg-dependent methyl migration to produce 3-hydroxy-3-methyl-2-ketobutyrate (HMKB). In the reductase reaction, this 2-ketoacid undergoes a metal-dependent reduction by NADPH to yield (R)-2,3-dihydroxy-isovalerate. The protein is Ketol-acid reductoisomerase (NADP(+)) of Tolumonas auensis (strain DSM 9187 / NBRC 110442 / TA 4).